A 293-amino-acid polypeptide reads, in one-letter code: MRRVSMRSLKRYLKAIWDLLRLEHGLMYGFGVVIGIYVSDPFFSDLWKLLLGYLTAVFLQASTFALNDYFDYEVDLVNNRTDRPLVRGDLSRRIALALAIALMPPGFVAAYLISPLAFIFAFAVSVLACLYDYKLKELGFAGNVYIAFTMAAPFLFGSIISSGWITEKTALLASMAFLTGVGREIMKGIEDVEGDALRDVRSLARTMGERKAASIASLFYLTAVSISPIPLFLLPEFLFDLKYAVPVSVTDVLLIYVALRLVGDYERESIRKYRKVTLVAMVLGLVGFFAGAF.

The next 7 helical transmembrane spans lie at 26–46 (LMYG…FSDL), 50–70 (LLGY…NDYF), 107–127 (FVAA…VSVL), 140–160 (FAGN…GSII), 215–235 (IASL…FLLP), 237–257 (FLFD…LIYV), and 273–293 (YRKV…AGAF).

It belongs to the UbiA prenyltransferase family. DGGGP synthase subfamily. Mg(2+) serves as cofactor.

The protein resides in the cell membrane. The catalysed reaction is sn-3-O-(geranylgeranyl)glycerol 1-phosphate + (2E,6E,10E)-geranylgeranyl diphosphate = 2,3-bis-O-(geranylgeranyl)-sn-glycerol 1-phosphate + diphosphate. Its pathway is membrane lipid metabolism; glycerophospholipid metabolism. Its function is as follows. Prenyltransferase that catalyzes the transfer of the geranylgeranyl moiety of geranylgeranyl diphosphate (GGPP) to the C2 hydroxyl of (S)-3-O-geranylgeranylglyceryl phosphate (GGGP). This reaction is the second ether-bond-formation step in the biosynthesis of archaeal membrane lipids. The protein is Digeranylgeranylglyceryl phosphate synthase of Archaeoglobus fulgidus (strain ATCC 49558 / DSM 4304 / JCM 9628 / NBRC 100126 / VC-16).